A 331-amino-acid chain; its full sequence is Ketol-acid reductoisomerase (NADP(+)) (331 aa).

In terms of domain architecture, KARI N-terminal Rossmann spans A2–T182. NADP(+)-binding positions include F25 to Q28, S51, S53, and D83 to Q86. H108 is a catalytic residue. G134 contributes to the NADP(+) binding site. Residues T183–I328 form the KARI C-terminal knotted domain. Mg(2+) contacts are provided by D191, E195, E227, and E231. S252 lines the substrate pocket.

Belongs to the ketol-acid reductoisomerase family. Mg(2+) serves as cofactor.

It catalyses the reaction (2R)-2,3-dihydroxy-3-methylbutanoate + NADP(+) = (2S)-2-acetolactate + NADPH + H(+). The enzyme catalyses (2R,3R)-2,3-dihydroxy-3-methylpentanoate + NADP(+) = (S)-2-ethyl-2-hydroxy-3-oxobutanoate + NADPH + H(+). It participates in amino-acid biosynthesis; L-isoleucine biosynthesis; L-isoleucine from 2-oxobutanoate: step 2/4. Its pathway is amino-acid biosynthesis; L-valine biosynthesis; L-valine from pyruvate: step 2/4. Involved in the biosynthesis of branched-chain amino acids (BCAA). Catalyzes an alkyl-migration followed by a ketol-acid reduction of (S)-2-acetolactate (S2AL) to yield (R)-2,3-dihydroxy-isovalerate. In the isomerase reaction, S2AL is rearranged via a Mg-dependent methyl migration to produce 3-hydroxy-3-methyl-2-ketobutyrate (HMKB). In the reductase reaction, this 2-ketoacid undergoes a metal-dependent reduction by NADPH to yield (R)-2,3-dihydroxy-isovalerate. The chain is Ketol-acid reductoisomerase (NADP(+)) from Thermoanaerobacter pseudethanolicus (strain ATCC 33223 / 39E) (Clostridium thermohydrosulfuricum).